We begin with the raw amino-acid sequence, 161 residues long: PRS fimbrial major pilin protein (161 aa).

Belongs to the fimbrial protein family.

The protein localises to the secreted. It is found in the fimbrium. Its function is as follows. Fimbriae (also called pili), polar filaments radiating from the surface of the bacterium to a length of 0.5-1.5 micrometers and numbering 100-300 per cell, enable bacteria to colonize the epithelium of specific host organs. The chain is PRS fimbrial major pilin protein (prsA) from Escherichia coli.